The chain runs to 66 residues: QTQNAHLEFVEVLNVKEQVVAGMMYYITLVATDDGYKKIYKTKIWVKEWENFKEVQEFKQIVYATK.

Residues 18–22 carry the Secondary area of contact motif; the sequence is QVVAG.

Belongs to the cystatin family. Phytocystatin subfamily. As to expression, in tubers of untreated plants. After ABA treatment or mechanical wounding is mostly accumulated in leaves, to a lesser extent in stems, but not in roots.

This is Cysteine proteinase inhibitor (CYS-PIN) from Solanum tuberosum (Potato).